Here is a 107-residue protein sequence, read N- to C-terminus: METLDKIKKQISENPILIYMKGSPKLPSCGFPARASEALMHCKVPFGYVDILQHPDIRAELPTYANWPTFPQLWVEGELIGGCDIILEMYQAGELQTLLAEVAAKHA.

The region spanning 4–106 (LDKIKKQISE…TLLAEVAAKH (103 aa)) is the Glutaredoxin domain. Lysine 21 contributes to the glutathione binding site. Cysteine 29 is a binding site for [2Fe-2S] cluster. Glutathione-binding positions include arginine 58, phenylalanine 70, and 83–84 (CD).

Belongs to the glutaredoxin family. Monothiol subfamily. Homodimer.

The protein resides in the cytoplasm. Its function is as follows. Monothiol glutaredoxin involved in the biogenesis of iron-sulfur clusters. This Haemophilus influenzae (strain ATCC 51907 / DSM 11121 / KW20 / Rd) protein is Glutaredoxin 4 (grxD).